We begin with the raw amino-acid sequence, 79 residues long: D-alanyl carrier protein (79 aa).

A Carrier domain is found at 1 to 77 (MDVKAEVIEI…KIVEGVTELR (77 aa)). O-(pantetheine 4'-phosphoryl)serine is present on Ser-35.

Belongs to the DltC family. In terms of processing, 4'-phosphopantetheine is transferred from CoA to a specific serine of apo-DCP.

Its subcellular location is the cytoplasm. The protein operates within cell wall biogenesis; lipoteichoic acid biosynthesis. Functionally, carrier protein involved in the D-alanylation of lipoteichoic acid (LTA). The loading of thioester-linked D-alanine onto DltC is catalyzed by D-alanine--D-alanyl carrier protein ligase DltA. The DltC-carried D-alanyl group is further transferred to cell membrane phosphatidylglycerol (PG) by forming an ester bond, probably catalyzed by DltD. D-alanylation of LTA plays an important role in modulating the properties of the cell wall in Gram-positive bacteria, influencing the net charge of the cell wall. The polypeptide is D-alanyl carrier protein (Streptococcus gordonii (strain Challis / ATCC 35105 / BCRC 15272 / CH1 / DL1 / V288)).